The chain runs to 432 residues: Serine--tRNA ligase (432 aa).

Thr238–Glu240 lines the L-serine pocket. Arg269 to Glu271 lines the ATP pocket. Residue Glu292 participates in L-serine binding. Glu357–Ser360 provides a ligand contact to ATP. Position 393 (Ser393) interacts with L-serine.

The protein belongs to the class-II aminoacyl-tRNA synthetase family. Type-1 seryl-tRNA synthetase subfamily. In terms of assembly, homodimer. The tRNA molecule binds across the dimer.

It localises to the cytoplasm. It carries out the reaction tRNA(Ser) + L-serine + ATP = L-seryl-tRNA(Ser) + AMP + diphosphate + H(+). It catalyses the reaction tRNA(Sec) + L-serine + ATP = L-seryl-tRNA(Sec) + AMP + diphosphate + H(+). Its pathway is aminoacyl-tRNA biosynthesis; selenocysteinyl-tRNA(Sec) biosynthesis; L-seryl-tRNA(Sec) from L-serine and tRNA(Sec): step 1/1. In terms of biological role, catalyzes the attachment of serine to tRNA(Ser). Is also able to aminoacylate tRNA(Sec) with serine, to form the misacylated tRNA L-seryl-tRNA(Sec), which will be further converted into selenocysteinyl-tRNA(Sec). The protein is Serine--tRNA ligase of Hyphomonas neptunium (strain ATCC 15444).